Here is a 327-residue protein sequence, read N- to C-terminus: Apoptosis facilitator Bcl-2-like protein 14 (327 aa).

Ser-44 carries the phosphoserine modification. The short motif at 212–226 (IVELLKYSGDQLERK) is the BH3 element. The BH2 signature appears at 308 to 315 (WIQQHGGW).

Belongs to the Bcl-2 family. Phosphorylated by MELK, leading to inhibit its pro-apoptotic function. As to expression, isoform 1 is widely expressed. Isoform 2 is testis-specific.

It localises to the cytoplasm. The protein resides in the cytosol. The protein localises to the endomembrane system. Plays a role in apoptosis. The protein is Apoptosis facilitator Bcl-2-like protein 14 (BCL2L14) of Homo sapiens (Human).